Here is a 704-residue protein sequence, read N- to C-terminus: Histone-lysine N-methyltransferase, H3 lysine-9 specific SUVH1 (704 aa).

Disordered regions lie at residues M1–L21 and P68–G176. Composition is skewed to polar residues over residues E80–P90 and S109–G121. A compositionally biased stretch (basic residues) spans G159–R170. The region spanning G265–R412 is the YDG domain. One can recognise a Pre-SET domain in the interval P487–G548. Residues C489, C491, C495, C502, C504, C530, C534, C536, and C540 each contribute to the Zn(2+) site. In terms of domain architecture, SET spans A551–G681. Residues R561–W563, D593, Y595, R635, and N638–H639 contribute to the S-adenosyl-L-methionine site. Zn(2+)-binding residues include C641, C692, C694, and C699. The Post-SET domain maps to R688 to Y704.

It belongs to the class V-like SAM-binding methyltransferase superfamily. Histone-lysine methyltransferase family. Suvar3-9 subfamily. In terms of assembly, interacts with LHP1. As to expression, expressed in roots, stems, leaves and flowers.

Its subcellular location is the nucleus. It localises to the chromosome. The catalysed reaction is N(6)-methyl-L-lysyl(27)-[histone H3] + S-adenosyl-L-methionine = N(6),N(6)-dimethyl-L-lysyl(27)-[histone H3] + S-adenosyl-L-homocysteine + H(+). It carries out the reaction L-lysyl(9)-[histone H3] + 2 S-adenosyl-L-methionine = N(6),N(6)-dimethyl-L-lysyl(9)-[histone H3] + 2 S-adenosyl-L-homocysteine + 2 H(+). It catalyses the reaction L-lysyl(27)-[histone H3] + S-adenosyl-L-methionine = N(6)-methyl-L-lysyl(27)-[histone H3] + S-adenosyl-L-homocysteine + H(+). In terms of biological role, histone methyltransferase. Methylates in vitro both 'Lys-9' and 'Lys-27' of histone H3. Required for in vivo dimethylation of 'Lys-9'. H3 'Lys-9' methylation represents a specific tag for epigenetic control for plant development and transcriptional repression. This Nicotiana tabacum (Common tobacco) protein is Histone-lysine N-methyltransferase, H3 lysine-9 specific SUVH1 (SUVH1).